The following is a 243-amino-acid chain: 4-hydroxy-tetrahydrodipicolinate reductase (243 aa).

Residues 9-14 (GANGKM), 78-80 (GTS), and 104-107 (APNF) contribute to the NAD(+) site. Residue His-134 is the Proton donor/acceptor of the active site. Position 135 (His-135) interacts with (S)-2,3,4,5-tetrahydrodipicolinate. Lys-138 acts as the Proton donor in catalysis. (S)-2,3,4,5-tetrahydrodipicolinate is bound at residue 144–145 (GT).

It belongs to the DapB family.

Its subcellular location is the cytoplasm. The catalysed reaction is (S)-2,3,4,5-tetrahydrodipicolinate + NAD(+) + H2O = (2S,4S)-4-hydroxy-2,3,4,5-tetrahydrodipicolinate + NADH + H(+). The enzyme catalyses (S)-2,3,4,5-tetrahydrodipicolinate + NADP(+) + H2O = (2S,4S)-4-hydroxy-2,3,4,5-tetrahydrodipicolinate + NADPH + H(+). The protein operates within amino-acid biosynthesis; L-lysine biosynthesis via DAP pathway; (S)-tetrahydrodipicolinate from L-aspartate: step 4/4. In terms of biological role, catalyzes the conversion of 4-hydroxy-tetrahydrodipicolinate (HTPA) to tetrahydrodipicolinate. This Legionella pneumophila subsp. pneumophila (strain Philadelphia 1 / ATCC 33152 / DSM 7513) protein is 4-hydroxy-tetrahydrodipicolinate reductase.